Reading from the N-terminus, the 220-residue chain is MAKQEYKQLPKRAEIHSATEQFKDTIKTSLGLDLFKGLGLTIKEFFSPSVTIHYPMEQLPLSPRYRAVHNLQRLLDSGSERCIGCGLCEKICTSNCIRIITHKGEDNRKKIDSYTINLGRCIYCGLCAEVCPELAIVMGNRFENASTQRSQYGSKSEFLTSEQDAKDCSHAEFLGFGFVSPNYNERMQATPLDYVQEPSKEESKKETPTSPEANKGDENV.

4Fe-4S ferredoxin-type domains are found at residues Leu-71–His-102 and Asp-112–Arg-141. Cys-82, Cys-85, Cys-88, Cys-92, Cys-121, Cys-124, Cys-127, and Cys-131 together coordinate [4Fe-4S] cluster. The interval Ala-189–Val-220 is disordered. The span at Pro-198–Thr-207 shows a compositional bias: basic and acidic residues.

This sequence belongs to the complex I 23 kDa subunit family. As to quaternary structure, NDH-1 is composed of 14 different subunits. Subunits NuoA, H, J, K, L, M, N constitute the membrane sector of the complex. [4Fe-4S] cluster serves as cofactor.

The protein localises to the cell inner membrane. The catalysed reaction is a quinone + NADH + 5 H(+)(in) = a quinol + NAD(+) + 4 H(+)(out). Functionally, NDH-1 shuttles electrons from NADH, via FMN and iron-sulfur (Fe-S) centers, to quinones in the respiratory chain. The immediate electron acceptor for the enzyme in this species is believed to be ubiquinone. Couples the redox reaction to proton translocation (for every two electrons transferred, four hydrogen ions are translocated across the cytoplasmic membrane), and thus conserves the redox energy in a proton gradient. The polypeptide is NADH-quinone oxidoreductase subunit I (Helicobacter acinonychis (strain Sheeba)).